Reading from the N-terminus, the 83-residue chain is Cell division topological specificity factor (83 aa).

The protein belongs to the MinE family.

Prevents the cell division inhibition by proteins MinC and MinD at internal division sites while permitting inhibition at polar sites. This ensures cell division at the proper site by restricting the formation of a division septum at the midpoint of the long axis of the cell. The sequence is that of Cell division topological specificity factor from Deinococcus deserti (strain DSM 17065 / CIP 109153 / LMG 22923 / VCD115).